The sequence spans 58 residues: Birtoxin (58 aa).

Positions Val-3–Val-58 constitute an LCN-type CS-alpha/beta domain. Disulfide bonds link Cys-18/Cys-41, Cys-27/Cys-46, and Cys-31/Cys-48.

As to expression, expressed by the venom gland.

Its subcellular location is the secreted. In terms of biological role, beta toxins bind voltage-independently at site-4 of sodium channels (Nav) and shift the voltage of activation toward more negative potentials thereby affecting sodium channel activation and promoting spontaneous and repetitive firing. Moderately toxic, but very high abundant. Does not target reptilian channels. Does not produce effect when administered to blowfly and cabbage looper larvae. In mice, produces convulsions, tremors, increased ventilation and, subsequently, death. This is Birtoxin from Parabuthus transvaalicus (Transvaal thick-tailed scorpion).